The following is a 351-amino-acid chain: uncharacterized protein (351 aa).

Positions 215, 226, 290, 319, and 333 each coordinate Mn(2+).

It belongs to the peptidase M24B family. Requires Mn(2+) as cofactor.

This is an uncharacterized protein from Staphylococcus aureus (strain MSSA476).